Consider the following 108-residue polypeptide: ATP-dependent Clp protease adapter protein ClpS (108 aa).

It belongs to the ClpS family. Binds to the N-terminal domain of the chaperone ClpA.

In terms of biological role, involved in the modulation of the specificity of the ClpAP-mediated ATP-dependent protein degradation. The chain is ATP-dependent Clp protease adapter protein ClpS from Cupriavidus necator (strain ATCC 17699 / DSM 428 / KCTC 22496 / NCIMB 10442 / H16 / Stanier 337) (Ralstonia eutropha).